The primary structure comprises 256 residues: Protein CUSTOS (256 aa).

The segment covering 1-19 (MVAPSGAMSDSENSSSSSS) has biased composition (low complexity). Disordered regions lie at residues 1–83 (MVAP…TPEF), 127–163 (FTSI…QRCR), and 227–256 (IQKK…KPEN). Ser-62 bears the Phosphoserine mark. The span at 63–83 (RRHEVNQHEEDGNDLRTTPEF) shows a compositional bias: basic and acidic residues. Residue Thr-80 is modified to Phosphothreonine. A Phosphoserine modification is found at Ser-139. Positions 228-235 (QKKRKKKA) match the Nucleolar localization signal (NLS) motif. Positions 228 to 237 (QKKRKKKAKK) are enriched in basic residues. Residues 246–256 (PAECAAAKPEN) show a composition bias toward low complexity.

It belongs to the CUSTOS family.

Its subcellular location is the nucleus envelope. Plays a role in the regulation of Wnt signaling pathway during early development. This Mus musculus (Mouse) protein is Protein CUSTOS.